A 252-amino-acid polypeptide reads, in one-letter code: Aspartate/glutamate leucyltransferase (252 aa).

Belongs to the R-transferase family. Bpt subfamily.

Its subcellular location is the cytoplasm. The enzyme catalyses N-terminal L-glutamyl-[protein] + L-leucyl-tRNA(Leu) = N-terminal L-leucyl-L-glutamyl-[protein] + tRNA(Leu) + H(+). It carries out the reaction N-terminal L-aspartyl-[protein] + L-leucyl-tRNA(Leu) = N-terminal L-leucyl-L-aspartyl-[protein] + tRNA(Leu) + H(+). Functions in the N-end rule pathway of protein degradation where it conjugates Leu from its aminoacyl-tRNA to the N-termini of proteins containing an N-terminal aspartate or glutamate. This chain is Aspartate/glutamate leucyltransferase, found in Agrobacterium fabrum (strain C58 / ATCC 33970) (Agrobacterium tumefaciens (strain C58)).